A 211-amino-acid chain; its full sequence is Redox-sensing transcriptional repressor Rex (211 aa).

The H-T-H motif DNA-binding region spans Leu-18–Phe-57. An NAD(+)-binding site is contributed by Gly-92–Gly-97.

This sequence belongs to the transcriptional regulatory Rex family. Homodimer.

It localises to the cytoplasm. Its function is as follows. Modulates transcription in response to changes in cellular NADH/NAD(+) redox state. The sequence is that of Redox-sensing transcriptional repressor Rex from Anoxybacillus flavithermus (strain DSM 21510 / WK1).